A 241-amino-acid chain; its full sequence is DNA repair protein RecO (241 aa).

Belongs to the RecO family.

Involved in DNA repair and RecF pathway recombination. This is DNA repair protein RecO from Xanthomonas campestris pv. campestris (strain B100).